A 143-amino-acid chain; its full sequence is Small ribosomal subunit protein uS11c (143 aa).

Belongs to the universal ribosomal protein uS11 family. As to quaternary structure, part of the 30S ribosomal subunit.

Its subcellular location is the plastid. It is found in the chloroplast. In Saccharum officinarum (Sugarcane), this protein is Small ribosomal subunit protein uS11c.